A 124-amino-acid polypeptide reads, in one-letter code: Cytochrome c oxidase subunit 4 isoform 1, mitochondrial (124 aa).

Lys-4 is modified (N6-acetyllysine; alternate). An N6-succinyllysine; alternate modification is found at Lys-4. 2 positions are modified to phosphoserine: Ser-31 and Ser-33. An N6-acetyllysine; alternate modification is found at Lys-35. Residue Lys-35 is modified to N6-succinyllysine; alternate. At Lys-42 the chain carries N6-acetyllysine.

Belongs to the cytochrome c oxidase IV family. In terms of assembly, component of the cytochrome c oxidase (complex IV, CIV), a multisubunit enzyme composed of 14 subunits. The complex is composed of a catalytic core of 3 subunits MT-CO1, MT-CO2 and MT-CO3, encoded in the mitochondrial DNA, and 11 supernumerary subunits COX4I, COX5A, COX5B, COX6A, COX6B, COX6C, COX7A, COX7B, COX7C, COX8 and NDUFA4, which are encoded in the nuclear genome. The complex exists as a monomer or a dimer and forms supercomplexes (SCs) in the inner mitochondrial membrane with NADH-ubiquinone oxidoreductase (complex I, CI) and ubiquinol-cytochrome c oxidoreductase (cytochrome b-c1 complex, complex III, CIII), resulting in different assemblies (supercomplex SCI(1)III(2)IV(1) and megacomplex MCI(2)III(2)IV(2)). Interacts with PHB2; the interaction decreases in absence of SPHK2. Interacts with AFG1L. Interacts with ABCB7; this interaction allows the regulation of cellular iron homeostasis and cellular reactive oxygen species (ROS) levels in cardiomyocytes. Interacts with FLVCR2; this interaction occurs in the absence of heme and is disrupted upon heme binding. Interacts with IRGC.

The protein localises to the mitochondrion inner membrane. The protein operates within energy metabolism; oxidative phosphorylation. Component of the cytochrome c oxidase, the last enzyme in the mitochondrial electron transport chain which drives oxidative phosphorylation. The respiratory chain contains 3 multisubunit complexes succinate dehydrogenase (complex II, CII), ubiquinol-cytochrome c oxidoreductase (cytochrome b-c1 complex, complex III, CIII) and cytochrome c oxidase (complex IV, CIV), that cooperate to transfer electrons derived from NADH and succinate to molecular oxygen, creating an electrochemical gradient over the inner membrane that drives transmembrane transport and the ATP synthase. Cytochrome c oxidase is the component of the respiratory chain that catalyzes the reduction of oxygen to water. Electrons originating from reduced cytochrome c in the intermembrane space (IMS) are transferred via the dinuclear copper A center (CU(A)) of subunit 2 and heme A of subunit 1 to the active site in subunit 1, a binuclear center (BNC) formed by heme A3 and copper B (CU(B)). The BNC reduces molecular oxygen to 2 water molecules using 4 electrons from cytochrome c in the IMS and 4 protons from the mitochondrial matrix. This is Cytochrome c oxidase subunit 4 isoform 1, mitochondrial (COX4I1) from Saimiri sciureus (Common squirrel monkey).